Here is an 84-residue protein sequence, read N- to C-terminus: Phosphoribosylformylglycinamidine synthase subunit PurS (84 aa).

Belongs to the PurS family. In terms of assembly, homodimer. Part of the FGAM synthase complex composed of 1 PurL, 1 PurQ and 2 PurS subunits.

The protein resides in the cytoplasm. It carries out the reaction N(2)-formyl-N(1)-(5-phospho-beta-D-ribosyl)glycinamide + L-glutamine + ATP + H2O = 2-formamido-N(1)-(5-O-phospho-beta-D-ribosyl)acetamidine + L-glutamate + ADP + phosphate + H(+). It participates in purine metabolism; IMP biosynthesis via de novo pathway; 5-amino-1-(5-phospho-D-ribosyl)imidazole from N(2)-formyl-N(1)-(5-phospho-D-ribosyl)glycinamide: step 1/2. Its function is as follows. Part of the phosphoribosylformylglycinamidine synthase complex involved in the purines biosynthetic pathway. Catalyzes the ATP-dependent conversion of formylglycinamide ribonucleotide (FGAR) and glutamine to yield formylglycinamidine ribonucleotide (FGAM) and glutamate. The FGAM synthase complex is composed of three subunits. PurQ produces an ammonia molecule by converting glutamine to glutamate. PurL transfers the ammonia molecule to FGAR to form FGAM in an ATP-dependent manner. PurS interacts with PurQ and PurL and is thought to assist in the transfer of the ammonia molecule from PurQ to PurL. This chain is Phosphoribosylformylglycinamidine synthase subunit PurS, found in Methanothermobacter thermautotrophicus (strain ATCC 29096 / DSM 1053 / JCM 10044 / NBRC 100330 / Delta H) (Methanobacterium thermoautotrophicum).